A 59-amino-acid polypeptide reads, in one-letter code: Small, acid-soluble spore protein H 2 (59 aa).

It belongs to the SspH family.

It is found in the spore core. The chain is Small, acid-soluble spore protein H 2 from Bacillus cytotoxicus (strain DSM 22905 / CIP 110041 / 391-98 / NVH 391-98).